Here is a 121-residue protein sequence, read N- to C-terminus: uncharacterized protein (121 aa).

Residues 101–121 (SIEPTATGSPETRDPDPSAYA) are disordered. Over residues 111 to 121 (ETRDPDPSAYA) the composition is skewed to basic and acidic residues.

It is found in the mitochondrion. This is an uncharacterized protein from Arabidopsis thaliana (Mouse-ear cress).